Reading from the N-terminus, the 375-residue chain is Dual specificity protein phosphatase 4 (375 aa).

The Rhodanese domain maps to 25-143 (SGGRCLLLDC…FASEYPEFCA (119 aa)). The Tyrosine-protein phosphatase domain occupies 176-317 (GPVEILPFLY…LLQFESQVLA (142 aa)). The active-site Phosphocysteine intermediate is Cys261.

The protein belongs to the protein-tyrosine phosphatase family. Non-receptor class dual specificity subfamily.

It localises to the nucleus. It catalyses the reaction O-phospho-L-tyrosyl-[protein] + H2O = L-tyrosyl-[protein] + phosphate. The enzyme catalyses O-phospho-L-seryl-[protein] + H2O = L-seryl-[protein] + phosphate. It carries out the reaction O-phospho-L-threonyl-[protein] + H2O = L-threonyl-[protein] + phosphate. In terms of biological role, regulates mitogenic signal transduction by dephosphorylating both Thr and Tyr residues on MAP kinases ERK1 and ERK2. This chain is Dual specificity protein phosphatase 4 (DUSP4), found in Gallus gallus (Chicken).